Here is a 538-residue protein sequence, read N- to C-terminus: ESX-3 secretion system ATPase EccB3 (538 aa).

Residues 1–16 (MTNQQHDHDFDHDRRS) show a composition bias toward basic and acidic residues. The tract at residues 1–25 (MTNQQHDHDFDHDRRSFASRTPVNN) is disordered. Residues 75 to 95 (VLMGVLIVITGLIGSFVFSLI) form a helical membrane-spanning segment.

This sequence belongs to the EccB family. As to quaternary structure, part of the ESX-3 / type VII secretion system (T7SS), which is composed of cytosolic and membrane components. The ESX-3 membrane complex is composed of EccB3, EccC3, EccD3 and EccE3.

It localises to the cell inner membrane. In terms of biological role, an ATPase. Part of the ESX-3 specialized secretion system, which is important for iron and zinc uptake or homeostasis. The chain is ESX-3 secretion system ATPase EccB3 from Mycobacterium tuberculosis (strain CDC 1551 / Oshkosh).